The sequence spans 486 residues: Cysteine--tRNA ligase (486 aa).

Cys30 is a binding site for Zn(2+). The short motif at 32–42 (PTVYDRAHLGN) is the 'HIGH' region element. Residues Cys221, His246, and Glu250 each coordinate Zn(2+). Residues 279 to 283 (KMSKS) carry the 'KMSKS' region motif. Lys282 contributes to the ATP binding site.

It belongs to the class-I aminoacyl-tRNA synthetase family. As to quaternary structure, monomer. Requires Zn(2+) as cofactor.

The protein resides in the cytoplasm. It catalyses the reaction tRNA(Cys) + L-cysteine + ATP = L-cysteinyl-tRNA(Cys) + AMP + diphosphate. The sequence is that of Cysteine--tRNA ligase from Cereibacter sphaeroides (strain ATCC 17029 / ATH 2.4.9) (Rhodobacter sphaeroides).